A 199-amino-acid polypeptide reads, in one-letter code: Ribonuclease HI (199 aa).

Residues 1–68 (MPVVECDIQT…TAVVQPDRGG (68 aa)) are not required for RNase H activity. The RNase H type-1 domain occupies 66 to 197 (RGGRVHAYFD…ADALANEALD (132 aa)). An as active as intact RNase H region spans residues 69–199 (RVHAYFDGAS…ALANEALDDA (131 aa)). 4 residues coordinate Mg(2+): aspartate 75, glutamate 115, aspartate 139, and aspartate 189. 4 residues coordinate Mn(2+): aspartate 75, glutamate 115, aspartate 139, and aspartate 189.

The protein belongs to the RNase H family. Mn(2+) is required as a cofactor. Mg(2+) serves as cofactor. The cofactor is Co(2+). Requires Ni(2+) as cofactor.

It is found in the cytoplasm. It carries out the reaction Endonucleolytic cleavage to 5'-phosphomonoester.. In terms of biological role, nuclease that specifically degrades the RNA of RNA-DNA hybrids; seems to act exonucleolytically on RNA/DNA hybrids. Endonucleolytically removes RNA primers from the Okazaki fragments of lagging strand synthesis on its own. Complements the temperature-sensitive phenotype of an E.coli double rnhA/rnhB (RNase H) disruption mutant. The chain is Ribonuclease HI (rnhA) from Halobacterium salinarum (strain ATCC 700922 / JCM 11081 / NRC-1) (Halobacterium halobium).